Reading from the N-terminus, the 99-residue chain is Large ribosomal subunit protein eL21 (99 aa).

Belongs to the eukaryotic ribosomal protein eL21 family.

This chain is Large ribosomal subunit protein eL21, found in Methanocella arvoryzae (strain DSM 22066 / NBRC 105507 / MRE50).